Consider the following 293-residue polypeptide: Phospholipid scramblase 2 (293 aa).

Positions 1–39 (MDKQNVQMNPPHPGTNLTGPPGHIGYPGPQAGYAVPPPG) are disordered. Residues 1 to 66 (MDKQNVQMNP…GHPGAPTQVP (66 aa)) form a proline-rich domain (PRD) region. The Cytoplasmic portion of the chain corresponds to 1 to 270 (MDKQNVQMNP…IQFPLDLDVK (270 aa)). Residue Thr143 is modified to Phosphothreonine; by PKC. 4 S-palmitoyl cysteine lipidation sites follow: Cys166, Cys167, Cys170, and Cys171. A helical membrane pass occupies residues 271-287 (MKAVMLGACFLIDFMFF). Residues 288–293 (EMTRGE) lie on the Extracellular side of the membrane.

Belongs to the phospholipid scramblase family. Ca(2+) serves as cofactor.

The protein localises to the membrane. The catalysed reaction is a 1,2-diacyl-sn-glycero-3-phosphocholine(in) = a 1,2-diacyl-sn-glycero-3-phosphocholine(out). Its function is as follows. May catalyze calcium-induced ATP-independent rapid bidirectional and non-specific movement of phospholipids (lipid scrambling or lipid flip-flop) between the inner and outer leaflet of the plasma membrane. This chain is Phospholipid scramblase 2, found in Bos taurus (Bovine).